The chain runs to 254 residues: Molybdate-binding protein ModA (254 aa).

Residues 1-24 (MKKLTKISTALLIAGLGFSFAASA) form the signal peptide. 5 residues coordinate molybdate: serine 33, serine 61, alanine 146, valine 173, and tyrosine 191.

It belongs to the bacterial solute-binding protein ModA family. As to quaternary structure, the complex is composed of two ATP-binding proteins (ModC), two transmembrane proteins (ModB) and a solute-binding protein (ModA).

It localises to the periplasm. Its function is as follows. Involved in the transport of molybdenum into the cell. This chain is Molybdate-binding protein ModA (modA), found in Haemophilus influenzae (strain ATCC 51907 / DSM 11121 / KW20 / Rd).